We begin with the raw amino-acid sequence, 285 residues long: Hsp90 co-chaperone Cdc37-like 1 (285 aa).

Residues L34 to L54 are disordered. Residues H35–N73 adopt a coiled-coil conformation.

It belongs to the CDC37 family. Forms complexes with Hsp70 and Hsp90.

Its subcellular location is the cytoplasm. In terms of biological role, co-chaperone that binds to numerous proteins and promotes their interaction with Hsp70 and Hsp90. This Xenopus tropicalis (Western clawed frog) protein is Hsp90 co-chaperone Cdc37-like 1 (cdc37l1).